The primary structure comprises 210 residues: Ribonuclease HII (210 aa).

The RNase H type-2 domain maps to 2-203; the sequence is SGVMGIDEAG…YKRVESEVKQ (202 aa). Positions 8, 9, and 99 each coordinate a divalent metal cation.

The protein belongs to the RNase HII family. The cofactor is Mn(2+). Mg(2+) is required as a cofactor.

Its subcellular location is the cytoplasm. The enzyme catalyses Endonucleolytic cleavage to 5'-phosphomonoester.. In terms of biological role, endonuclease that specifically degrades the RNA of RNA-DNA hybrids. This is Ribonuclease HII from Methanopyrus kandleri (strain AV19 / DSM 6324 / JCM 9639 / NBRC 100938).